We begin with the raw amino-acid sequence, 244 residues long: Cell division protein DivIB (244 aa).

Residues 1–6 (MKIKWP) lie on the Cytoplasmic side of the membrane. A helical transmembrane segment spans residues 7-27 (LQLWISLAVFVTIAVGTLLLL). Residues 28 to 104 (QPWQTIKTVT…IDIAEKVTAG (77 aa)) form the POTRA domain. At 28-244 (QPWQTIKTVT…KADNKAHQKQ (217 aa)) the chain is on the extracellular side.

The protein belongs to the FtsQ/DivIB family. DivIB subfamily.

It is found in the cell membrane. Its function is as follows. Cell division protein that may be involved in stabilizing or promoting the assembly of the division complex. This chain is Cell division protein DivIB, found in Leuconostoc kimchii (strain IMSNU 11154 / KCTC 2386 / IH25).